Here is an 83-residue protein sequence, read N- to C-terminus: Hainantoxin-III 12 (83 aa).

The first 21 residues, 1 to 21, serve as a signal peptide directing secretion; that stretch reads MKASMFLALAGLVLLFVVGYA. The propeptide occupies 22-48; it reads SGSEEKEFPRELLSKIFAVDDFKGEER. 3 disulfide bridges follow: cysteine 50–cysteine 65, cysteine 57–cysteine 70, and cysteine 64–cysteine 77. Leucine 81 bears the Leucine amide mark.

This sequence belongs to the neurotoxin 10 (Hwtx-1) family. 15 (Hntx-3) subfamily. As to quaternary structure, monomer. As to expression, expressed by the venom gland.

Its subcellular location is the secreted. Selective antagonist of neuronal tetrodotoxin (TTX)-sensitive voltage-gated sodium channels (IC(50)=1270 nM on Nav1.1/SCN1A, 270 nM on Nav1.2/SCN2A, 491 nM on Nav1.3/SCN3A and 232 nM on Nav1.7/SCN9A). This toxin suppress Nav1.7 current amplitude without significantly altering the activation, inactivation, and repriming kinetics. Short extreme depolarizations partially activate the toxin-bound channel, indicating voltage-dependent inhibition of this toxin. This toxin increases the deactivation of the Nav1.7 current after extreme depolarizations. The toxin-Nav1.7 complex is gradually dissociated upon prolonged strong depolarizations in a voltage-dependent manner, and the unbound toxin rebinds to Nav1.7 after a long repolarization. Moreover, analysis of chimeric channels showed that the DIIS3-S4 linker is critical for toxin binding to Nav1.7. These data are consistent with this toxin interacting with Nav1.7 site 4 and trapping the domain II voltage sensor in the closed state. In Cyriopagopus hainanus (Chinese bird spider), this protein is Hainantoxin-III 12.